The primary structure comprises 198 residues: Ribonuclease HII (198 aa).

In terms of domain architecture, RNase H type-2 spans Q10 to S198. Residues D16, E17, and D108 each contribute to the a divalent metal cation site.

Belongs to the RNase HII family. Mn(2+) serves as cofactor. It depends on Mg(2+) as a cofactor.

The protein resides in the cytoplasm. The catalysed reaction is Endonucleolytic cleavage to 5'-phosphomonoester.. Its function is as follows. Endonuclease that specifically degrades the RNA of RNA-DNA hybrids. The polypeptide is Ribonuclease HII (Escherichia coli O81 (strain ED1a)).